The chain runs to 446 residues: UPF0597 protein DvMF_1488 (446 aa).

This sequence belongs to the UPF0597 family.

This chain is UPF0597 protein DvMF_1488, found in Nitratidesulfovibrio vulgaris (strain DSM 19637 / Miyazaki F) (Desulfovibrio vulgaris).